Reading from the N-terminus, the 596-residue chain is Cysteine--tRNA ligase (596 aa).

A unknown region spans residues 1 to 199 (MKSKTFLEKN…SQRYFEELRK (199 aa)). Zn(2+) is bound at residue Cys212. Positions 214 to 224 (PTVYDEVHIGN) match the 'HIGH' region motif. Zn(2+)-binding residues include Cys377, His403, and Glu407. The short motif at 435–439 (KMSKS) is the 'KMSKS' region element. Lys438 is an ATP binding site.

Belongs to the class-I aminoacyl-tRNA synthetase family. In terms of assembly, monomer. Zn(2+) is required as a cofactor.

Its subcellular location is the cytoplasm. The enzyme catalyses tRNA(Cys) + L-cysteine + ATP = L-cysteinyl-tRNA(Cys) + AMP + diphosphate. This is Cysteine--tRNA ligase (cysS) from Mycoplasmopsis pulmonis (strain UAB CTIP) (Mycoplasma pulmonis).